The sequence spans 173 residues: Crossover junction endodeoxyribonuclease RuvC (173 aa).

Active-site residues include Asp-8, Glu-67, and Asp-139. Mg(2+)-binding residues include Asp-8, Glu-67, and Asp-139.

Belongs to the RuvC family. Homodimer which binds Holliday junction (HJ) DNA. The HJ becomes 2-fold symmetrical on binding to RuvC with unstacked arms; it has a different conformation from HJ DNA in complex with RuvA. In the full resolvosome a probable DNA-RuvA(4)-RuvB(12)-RuvC(2) complex forms which resolves the HJ. Mg(2+) is required as a cofactor.

Its subcellular location is the cytoplasm. It carries out the reaction Endonucleolytic cleavage at a junction such as a reciprocal single-stranded crossover between two homologous DNA duplexes (Holliday junction).. In terms of biological role, the RuvA-RuvB-RuvC complex processes Holliday junction (HJ) DNA during genetic recombination and DNA repair. Endonuclease that resolves HJ intermediates. Cleaves cruciform DNA by making single-stranded nicks across the HJ at symmetrical positions within the homologous arms, yielding a 5'-phosphate and a 3'-hydroxyl group; requires a central core of homology in the junction. The consensus cleavage sequence is 5'-(A/T)TT(C/G)-3'. Cleavage occurs on the 3'-side of the TT dinucleotide at the point of strand exchange. HJ branch migration catalyzed by RuvA-RuvB allows RuvC to scan DNA until it finds its consensus sequence, where it cleaves and resolves the cruciform DNA. The sequence is that of Crossover junction endodeoxyribonuclease RuvC from Vibrio parahaemolyticus serotype O3:K6 (strain RIMD 2210633).